Here is a 498-residue protein sequence, read N- to C-terminus: Putative phosphotransferase 057R (498 aa).

This Dryophytes versicolor (chameleon treefrog) protein is Putative phosphotransferase 057R.